The primary structure comprises 187 residues: Phospholipase A2-gamma (187 aa).

Positions methionine 1–serine 25 are cleaved as a signal peptide. Disulfide bonds link cysteine 29-cysteine 56, cysteine 33-cysteine 62, cysteine 38-cysteine 115, cysteine 49-cysteine 69, cysteine 68-cysteine 93, and cysteine 75-cysteine 86. Residues tyrosine 48, glycine 50, and tyrosine 53 each contribute to the Ca(2+) site. Histidine 72 is a catalytic residue. Position 73 (aspartate 73) interacts with Ca(2+).

This sequence belongs to the phospholipase A2 family. The cofactor is Ca(2+). Strongly expressed in mature flowers but weakly expressed in other tissues. Detected in buds, open flowers and in pollen.

The protein localises to the secreted. The protein resides in the golgi apparatus. It localises to the trans-Golgi network. It is found in the endoplasmic reticulum. It catalyses the reaction a 1,2-diacyl-sn-glycero-3-phosphocholine + H2O = a 1-acyl-sn-glycero-3-phosphocholine + a fatty acid + H(+). Functionally, PA2 catalyzes the calcium-dependent hydrolysis of the 2-acyl groups in 3-sn-phosphoglycerides. Releases lysophospholipids (LPLs) and free fatty acids (FFAs) from membrane phospholipids in response to hormones and other external stimuli. Plays a role in pollen development and germination and tube growth. The chain is Phospholipase A2-gamma (PLA2-GAMMA) from Arabidopsis thaliana (Mouse-ear cress).